The sequence spans 310 residues: GPN-loop GTPase 2 (310 aa).

At Ala-2 the chain carries N-acetylalanine. A GTP-binding site is contributed by 19–24; that stretch reads GSGKTT. Residues 76-78 carry the Gly-Pro-Asn (GPN)-loop; involved in dimer interface motif; it reads GPN. 178–181 serves as a coordination point for GTP; it reads SKMD.

This sequence belongs to the GPN-loop GTPase family. Heterodimers with GPN1 or GPN3. Binds to RNA polymerase II (RNAPII).

Its function is as follows. Small GTPase required for proper localization of RNA polymerase II and III (RNAPII and RNAPIII). May act at an RNAP assembly step prior to nuclear import. The polypeptide is GPN-loop GTPase 2 (Mus musculus (Mouse)).